Consider the following 501-residue polypeptide: Solute carrier family 2, facilitated glucose transporter member 5 (501 aa).

At methionine 1 the chain carries N-acetylmethionine. Residues 1-18 (MEQQDQSMKEGRLTLVLA) are Cytoplasmic-facing. Residues 19–39 (LATLIAAFGSSFQYGYNVAAV) form a helical membrane-spanning segment. Tyrosine 32 serves as a coordination point for D-fructose. Residues 40-68 (NSPALLMQQFYNETYYGRTGEFMEDFPLT) are Extracellular-facing. Residue asparagine 51 is glycosylated (N-linked (GlcNAc...) asparagine). Residues 69–91 (LLWSVTVSMFPFGGFIGSLLVGP) form a helical membrane-spanning segment. Over 92–98 (LVNKFGR) the chain is Cytoplasmic. The helical transmembrane segment at 99 to 119 (KGALLFNNIFSIVPAILMGCS) threads the bilayer. Topologically, residues 120–126 (RVATSFE) are extracellular. The chain crosses the membrane as a helical span at residues 127–149 (LIIISRLLVGICAGVSSNVVPMY). Over 150–161 (LGELAPKNLRGA) the chain is Cytoplasmic. The helical transmembrane segment at 162–182 (LGVVPQLFITVGILVAQIFGL) threads the bilayer. Residue glutamine 167 coordinates D-fructose. Residues 183–192 (RNLLANVDGW) are Extracellular-facing. Residues 193–213 (PILLGLTGVPAALQLLLLPFF) form a helical membrane-spanning segment. Over 214 to 277 (PESPRYLLIQ…LFRMRSLRWQ (64 aa)) the chain is Cytoplasmic. Residues 278 to 298 (LLSIIVLMGGQQLSGVNAIYY) form a helical membrane-spanning segment. D-fructose contacts are provided by residues glutamine 288 and 296–298 (IYY). At 299 to 313 (YADQIYLSAGVPEEH) the chain is on the extracellular side. A helical membrane pass occupies residues 314 to 334 (VQYVTAGTGAVNVVMTFCAVF). Residues 335–342 (VVELLGRR) are Cytoplasmic-facing. A helical transmembrane segment spans residues 343 to 363 (LLLLLGFSICLIACCVLTAAL). Residues 364–371 (ALQDTVSW) are Extracellular-facing. The chain crosses the membrane as a helical span at residues 372–394 (MPYISIVCVISYVIGHALGPSPI). A D-fructose-binding site is contributed by histidine 387. Topologically, residues 395–412 (PALLITEIFLQSSRPSAF) are cytoplasmic. The helical transmembrane segment at 413 to 433 (MVGGSVHWLSNFTVGLIFPFI) threads the bilayer. A D-fructose-binding site is contributed by 419-420 (HW). The Extracellular portion of the chain corresponds to 434–439 (QEGLGP). Residues 440-460 (YSFIVFAVICLLTTIYIFLIV) traverse the membrane as a helical segment. The Cytoplasmic portion of the chain corresponds to 461–501 (PETKAKTFIEINQIFTKMNKVSEVYPEKEELKELPPVTSEQ).

In terms of tissue distribution, detected in skeletal muscle, and in jejunum brush border membrane and basolateral membrane (at protein level). Expressed in small intestine, and at much lower levels in kidney, skeletal muscle, and adipose tissue.

It localises to the apical cell membrane. Its subcellular location is the cell membrane. The protein resides in the sarcolemma. The enzyme catalyses D-fructose(out) = D-fructose(in). Its activity is regulated as follows. The uptake of 2-deoxyglucose is inhibited by cytochalasin B. Fructose transport is inhibited by the flavonoids epigallocatechin gallate and apigenin but not quercetin. Functions as a fructose transporter that has only low activity with other monosaccharides. Can mediate the uptake of 2-deoxyglucose, but with low efficiency. Essential for fructose uptake in the small intestine. Plays a role in the regulation of salt uptake and blood pressure in response to dietary fructose. Required for the development of high blood pressure in response to high dietary fructose intake. This chain is Solute carrier family 2, facilitated glucose transporter member 5, found in Homo sapiens (Human).